Here is a 135-residue protein sequence, read N- to C-terminus: MNGSSAFHIILSVTFMVFLFGGLCEAGVVVNVDIINDIGPNVQLGLHCKSKDKDLGPQSLAPQQHWGFRKTLDFWGVTLFFCHFEWENQSKWFDILVAGRDRNTCAEHPCVWSIRPSGPCRLTGKEKCFPWNDQY.

An N-terminal signal peptide occupies residues 1 to 26 (MNGSSAFHIILSVTFMVFLFGGLCEA). N-linked (GlcNAc...) asparagine glycosylation occurs at Asn88.

Belongs to the plant self-incompatibility (S1) protein family.

The protein localises to the secreted. The protein is S-protein homolog 20 of Arabidopsis thaliana (Mouse-ear cress).